The following is a 123-amino-acid chain: Small ribosomal subunit protein uS11 (123 aa).

This sequence belongs to the universal ribosomal protein uS11 family. Part of the 30S ribosomal subunit. Interacts with proteins S7 and S18. Binds to IF-3.

Functionally, located on the platform of the 30S subunit, it bridges several disparate RNA helices of the 16S rRNA. Forms part of the Shine-Dalgarno cleft in the 70S ribosome. This chain is Small ribosomal subunit protein uS11, found in Coxiella burnetii (strain RSA 331 / Henzerling II).